The following is a 519-amino-acid chain: AAA-ATPase At4g30250 (519 aa).

An N-terminal signal peptide occupies residues 1 to 24 (MSDYWTTMASLLGMLAFCQTIVQL). ATP is bound at residue 252 to 259 (GPPGTGKS). Disordered regions lie at residues 315–335 (GKNK…NGSG) and 467–519 (KSVG…EKEK). Positions 479-488 (QEEEEEAEEE) are enriched in acidic residues. Positions 489 to 508 (QEKRALDSPNRRNREVCGFR) are enriched in basic and acidic residues. Residues 509–519 (EEEEEEDEKEK) show a composition bias toward acidic residues.

The protein belongs to the AAA ATPase family. BCS1 subfamily. Requires Mg(2+) as cofactor.

The enzyme catalyses ATP + H2O = ADP + phosphate + H(+). The polypeptide is AAA-ATPase At4g30250 (Arabidopsis thaliana (Mouse-ear cress)).